We begin with the raw amino-acid sequence, 716 residues long: Ciliary WD repeat-containing protein ctxp80 (716 aa).

The segment at 1–53 (MGCGGSSGASDPSSEKINWNNAEIHDEFKQEQKKAGAKRKAFDKTTGKAVEKE) is disordered. Polar residues predominate over residues 8–21 (GASDPSSEKINWNN). A compositionally biased stretch (basic and acidic residues) spans 23 to 53 (EIHDEFKQEQKKAGAKRKAFDKTTGKAVEKE). 10 WD repeats span residues 167-208 (YHTN…KKGR), 213-254 (KGGR…QVKK), 257-297 (SGPD…FKKK), 305-343 (GKPT…STYD), 345-382 (HGKG…AEKT), 424-462 (HSDG…STAL), 529-568 (DSGE…KLGT), 571-610 (AHNS…QDPS), 639-678 (TDGT…GATP), and 683-715 (GHSE…QWKK).

The protein belongs to the WD repeat EMAP family.

This chain is Ciliary WD repeat-containing protein ctxp80, found in Euplotoides octocarinatus (Freshwater ciliate).